We begin with the raw amino-acid sequence, 507 residues long: ATP synthase subunit alpha (507 aa).

ATP is bound at residue 170–177; sequence GDRKTGKT.

The protein belongs to the ATPase alpha/beta chains family. As to quaternary structure, F-type ATPases have 2 components, CF(1) - the catalytic core - and CF(0) - the membrane proton channel. CF(1) has five subunits: alpha(3), beta(3), gamma(1), delta(1), epsilon(1). CF(0) has three main subunits: a(1), b(2) and c(9-12). The alpha and beta chains form an alternating ring which encloses part of the gamma chain. CF(1) is attached to CF(0) by a central stalk formed by the gamma and epsilon chains, while a peripheral stalk is formed by the delta and b chains.

It localises to the cell inner membrane. The catalysed reaction is ATP + H2O + 4 H(+)(in) = ADP + phosphate + 5 H(+)(out). In terms of biological role, produces ATP from ADP in the presence of a proton gradient across the membrane. The alpha chain is a regulatory subunit. This is ATP synthase subunit alpha from Anaplasma marginale (strain Florida).